The chain runs to 210 residues: Ribosomal RNA large subunit methyltransferase E (210 aa).

S-adenosyl-L-methionine contacts are provided by Gly61, Trp63, Asp81, Asp97, and Asp122. Lys162 serves as the catalytic Proton acceptor.

It belongs to the class I-like SAM-binding methyltransferase superfamily. RNA methyltransferase RlmE family.

It is found in the cytoplasm. It carries out the reaction uridine(2552) in 23S rRNA + S-adenosyl-L-methionine = 2'-O-methyluridine(2552) in 23S rRNA + S-adenosyl-L-homocysteine + H(+). Functionally, specifically methylates the uridine in position 2552 of 23S rRNA at the 2'-O position of the ribose in the fully assembled 50S ribosomal subunit. The chain is Ribosomal RNA large subunit methyltransferase E from Xanthomonas axonopodis pv. citri (strain 306).